Consider the following 389-residue polypeptide: GTPase Obg (389 aa).

Residues 1–159 form the Obg domain; the sequence is MKFVDEAVIR…RSLKLELMLL (159 aa). The interval 122–144 is disordered; sequence FHGLGNTRFKSSTNRAPRQKTLG. The 174-residue stretch at 160 to 333 folds into the OBG-type G domain; the sequence is ADVGLLGMPN…LSLKLIDFIE (174 aa). GTP-binding positions include 166–173, 191–195, 213–216, 283–286, and 314–316; these read GMPNAGKS, FTTLV, DIPG, NKTD, and SAY. 2 residues coordinate Mg(2+): S173 and T193.

It belongs to the TRAFAC class OBG-HflX-like GTPase superfamily. OBG GTPase family. Monomer. The cofactor is Mg(2+).

Its subcellular location is the cytoplasm. Functionally, an essential GTPase which binds GTP, GDP and possibly (p)ppGpp with moderate affinity, with high nucleotide exchange rates and a fairly low GTP hydrolysis rate. Plays a role in control of the cell cycle, stress response, ribosome biogenesis and in those bacteria that undergo differentiation, in morphogenesis control. In Shewanella woodyi (strain ATCC 51908 / MS32), this protein is GTPase Obg.